The chain runs to 286 residues: Shikimate dehydrogenase (NADP(+)) (286 aa).

Shikimate-binding positions include 19 to 21 (SLS) and Thr66. The active-site Proton acceptor is Lys70. Shikimate-binding residues include Asn91 and Asp107. Residues 129 to 133 (GSGGA) and Leu229 each bind NADP(+). Tyr231 serves as a coordination point for shikimate. Gly252 is a binding site for NADP(+).

The protein belongs to the shikimate dehydrogenase family. Homodimer.

The catalysed reaction is shikimate + NADP(+) = 3-dehydroshikimate + NADPH + H(+). It participates in metabolic intermediate biosynthesis; chorismate biosynthesis; chorismate from D-erythrose 4-phosphate and phosphoenolpyruvate: step 4/7. Its function is as follows. Involved in the biosynthesis of the chorismate, which leads to the biosynthesis of aromatic amino acids. Catalyzes the reversible NADPH linked reduction of 3-dehydroshikimate (DHSA) to yield shikimate (SA). This is Shikimate dehydrogenase (NADP(+)) from Prochlorococcus marinus (strain MIT 9215).